Here is a 1377-residue protein sequence, read N- to C-terminus: MKEIKDFEKIKIKIASPDQIRNWSYGEVKKSETINYRTLRPEKDGLFCERIFGTTKEWECYCGKFKSVRYKGIICDRCNVEVTHFKVRRERMGHIELAAPVAHIWYYKYIPSRIGLLLDITASSLNSILYYEKYVVIEPGDTDLKKMQLLNEDEYIEARERYGMSFNASMGAEAIKSLLENLDLDELSSKLRIQMIDKDDKTDKKLLRRLEIIENFKISGNKPEWMIMEVLPVIPPEIRPMVQLDGGRFATSDLNDLYRRVINRNNRLRKLLLLNAPEIIVRNEKRMLQESVDSLFDNSHKRKVVKGSSSRPLKSLSDALKGKQGRFRQNLLGKRVDYSGRSVIVVGPELKLHQCGLPAKMALELFKPFVIRRLIESEAVFNIKRAKNLIEQEVDEVWQILDLVIKEHPILLNRAPTLHRLGIQAFEPVLVEGKAIKLHPLVCHAYNADFDGDQMAVHVPLTPSAQAESWALMLSTNNLLNPANGHPIVFPSQDIVLGLYYLTMEKKNTVGEGKKFLNFNNVILAINNRSLDYNASIYVKIDGKYKKTTAGRVIFNEALPNGIEFVNKTLSDLELQILISKVYVVHGSSTVIEMLDIIKELGFKYATKFGCTISMSDIIVPDEKKAYIDRANKEIAKIQNDYAKGVITGEERYNNVVSVWLKTNEELTNKMMEILKKDRDGFNVIYMMADSGARGSRNQIRQLAGMRGLMAKTSGDIIELPIISNFKEGLSVIEFFISTNGARKGLADTALKTADAGYLTRRLVDIAQDVVVRIEDCGTINGIKVETVKNGEEILESLKEKAVGSYSIERIKNPITGEIVLDANEEISEAKIELLEKIGIEKLVIRSVLTCEAEHGVCQKCYGRDFSKNKPVNIGEAVGIIAAQSIGQPGTQLTMRTFHIGGVAQAGSEDDKISLKNTFILNGIEGFNVRVENGILFTRKGTLKIINVFYEEKIKNIKEIKVSDSQRVIKGIPLFVNNKGVEILSSYIGYVKLRDDKFLIVSEEQEVSLKAGTKLEIEVGEYVESGKVIGTFDPFAEPIIAEVKGKIKFKDIILGTTLKEEINTETGNVEKRITDNVFESLDPRIFIIDSGGVEIASYVLPGDAYLQVEDGQNINIGDIIAKLSKGSEKTQDITGGLPRVNDLFETRIPKNLTEMAKVSGIVQFKSIQKGKRLINILDEYGVEHKHYIPAGKHLLVRDGDIVKAGDMLCDGRINPHDVLEILGGISLQEFLLAEIQDVYRKQGVSINDKHIGVIIKQMMKKVKIVAVGDTNFVYGQKVDKHTFYEQNRKVIEQGGEPAIASPILIGVTKTSLNIDSFISAASFQETTKVLTDASIAGKIDDLRGLKENVVIGHLIPTGTGMGLYKKIKVSENVNSEV.

The Zn(2+) site is built by C60, C62, C75, and C78. Mg(2+)-binding residues include D449, D451, and D453. C777, C851, C858, and C861 together coordinate Zn(2+).

It belongs to the RNA polymerase beta' chain family. As to quaternary structure, the RNAP catalytic core consists of 2 alpha, 1 beta, 1 beta' and 1 omega subunit. When a sigma factor is associated with the core the holoenzyme is formed, which can initiate transcription. Requires Mg(2+) as cofactor. The cofactor is Zn(2+).

The catalysed reaction is RNA(n) + a ribonucleoside 5'-triphosphate = RNA(n+1) + diphosphate. DNA-dependent RNA polymerase catalyzes the transcription of DNA into RNA using the four ribonucleoside triphosphates as substrates. The polypeptide is DNA-directed RNA polymerase subunit beta' (Borreliella afzelii (strain PKo) (Borrelia afzelii)).